Reading from the N-terminus, the 193-residue chain is Xanthine phosphoribosyltransferase (193 aa).

Xanthine-binding residues include L20 and T27. 128–132 provides a ligand contact to 5-phospho-alpha-D-ribose 1-diphosphate; that stretch reads ANGQA. K156 contacts xanthine.

The protein belongs to the purine/pyrimidine phosphoribosyltransferase family. Xpt subfamily. Homodimer.

The protein localises to the cytoplasm. The enzyme catalyses XMP + diphosphate = xanthine + 5-phospho-alpha-D-ribose 1-diphosphate. It participates in purine metabolism; XMP biosynthesis via salvage pathway; XMP from xanthine: step 1/1. Functionally, converts the preformed base xanthine, a product of nucleic acid breakdown, to xanthosine 5'-monophosphate (XMP), so it can be reused for RNA or DNA synthesis. The chain is Xanthine phosphoribosyltransferase from Streptococcus uberis (strain ATCC BAA-854 / 0140J).